The following is a 388-amino-acid chain: Probable Na(+)/H(+) antiporter 3 (388 aa).

12 helical membrane passes run 2–22, 27–47, 53–73, 81–101, 102–122, 146–166, 175–195, 215–235, 263–283, 294–314, 325–345, and 354–374; these read ESYYYVFFIILSIIFIVPNLL, IPAITSIMIAGIIIGPYGLNI, TLKILADFGAIMLMFLAGLEV, EFKNSLILSLFSLLIPGVGGY, LIGQYLGLGFIGSLLYAVIFA, IILSATIIVDLFTLLLLSVVI, VGTFLLETVLYIGVLLLAIPS, VLFIIFIAIIVGEVIGIHPIV, AIGYGFFIPIFFLVLGMETNI, LLLITLISAVALKFISGFIAL, TIGGLLTVPKISASLVAASIG, and EIFVTIVALSVITATITPIVV.

It belongs to the monovalent cation:proton antiporter 1 (CPA1) transporter (TC 2.A.36) family.

The protein localises to the cell membrane. Functionally, this is probably a Na(+)/H(+) antiporter. This Methanocaldococcus jannaschii (strain ATCC 43067 / DSM 2661 / JAL-1 / JCM 10045 / NBRC 100440) (Methanococcus jannaschii) protein is Probable Na(+)/H(+) antiporter 3.